Here is a 927-residue protein sequence, read N- to C-terminus: Disks large homolog 1 (927 aa).

The L27 domain maps to 4 to 64 (RKQDTQRALH…FYEVTLLDNP (61 aa)). T115 is subject to Phosphothreonine. S122, S138, and S158 each carry phosphoserine. Positions 162 to 212 (PTEAVPPSSPTVPVIPVLPVPAENTVILPTIPQANPPPVLVNTDSLETSTY) are interaction with SH3 domains. The required for interaction with MARCHF2 stretch occupies residues 224 to 546 (EITLERGNSG…QAVTIVAQYR (323 aa)). 3 PDZ domains span residues 230–317 (GNSG…SEKI), 325–412 (GPKG…YMND), and 474–555 (TGLG…RFEA). The residue at position 232 (S232) is a Phosphoserine. Y399 bears the Phosphotyrosine mark. Phosphoserine is present on residues S568, S573, S575, S579, S598, S619, S707, S710, and S857. The SH3 domain occupies 581 to 651 (KRSLYVRALF…PSKRRVEKKE (71 aa)). Residues 683–858 (RKFPFYKNKD…ISIFIKPKSM (176 aa)) form the Guanylate kinase-like domain. The disordered stretch occupies residues 691 to 719 (KDQSEQETSDADQHITSNASDSESSYRGQ). A compositionally biased stretch (polar residues) spans 704-717 (HITSNASDSESSYR).

Belongs to the MAGUK family. As to quaternary structure, homotetramer. Interacts (via guanylate kinase-like domain) with DLGAP1, DLGAP2, DLGAP3, DLGAP4 and MAP1A. Interacts (via guanylate kinase-like domain) with KIF13B. May interact with HTR2A. Interacts (via PDZ domains) with GRIA1. Interacts (via PDZ domains) with GRIN2A. Interacts (via PDZ domains) with KCND2 and KCND3. Interacts (via PDZ domains) with KCNA1, KCNA2, KCNA3 and KCNA4. Interacts (via PDZ domains) with ADGRA3. Interacts with KCNF1. Interacts with CAMK2. Interacts with cytoskeleton-associated protein EPB41. Interacts with cytoskeleton-associated protein EZR. Found in a complex with KCNA5 and CAV3. Found in a complex with APC and CTNNB1. Interacts (via PDZ domains) with APC. Interacts with CDH1 through binding to PIK3R1. Forms multiprotein complexes with CASK, LIN7A, LIN7B, LIN7C, APBA1, and KCNJ12. Interacts with TOPK. Forms a tripartite complex composed of DLG1, MPP7 and LIN7 (LIN7A or LIN7C). May interact with TJAP1. Interacts with PTEN. Interacts with FRMPD4 (via C-terminus). Interacts with LRFN1, LRFN2 and LRFN4. Interacts with SFPQ. Interacts (via PDZ domains) with ADGRA2 (via PDZ-binding motif). Interacts with ADAM10; this interaction recruits ADAM10 to the cell membrane during long-term depression in hippocampal neurons. Interacts with DGKI (via PDZ-binding motif). Interacts (via PDZ domains) with MARCHF2 (via PDZ domain); the interaction leads to DLG1 ubiqtuitination and degradation. Interacts (via N-terminus) with MPP3; this interaction connects CADM1 with DLG1 and links CADM1 with the regulatory subunit of phosphoinositide-3-kinase (PI3K) by forming a multiprotein complex and participates in cell spreading. Post-translationally, phosphorylated by MAPK12. Phosphorylation of Ser-232 regulates association with GRIN2A. In terms of processing, ubiquitinated; by MARCHF2 which results in its degradation.

The protein resides in the cell membrane. The protein localises to the basolateral cell membrane. Its subcellular location is the endoplasmic reticulum membrane. It localises to the postsynaptic density. It is found in the synapse. The protein resides in the sarcolemma. The protein localises to the apical cell membrane. Its subcellular location is the cell junction. It localises to the cytoplasm. Its function is as follows. Essential multidomain scaffolding protein required for normal development. Recruits channels, receptors and signaling molecules to discrete plasma membrane domains in polarized cells. Promotes epithelial cell layer barrier function via maintaining cell-cell adhesion. May also play a role in adherens junction assembly, signal transduction, cell proliferation, synaptogenesis and lymphocyte activation. Regulates the excitability of cardiac myocytes by modulating the functional expression of Kv4 channels. Functional regulator of Kv1.5 channel. During long-term depression in hippocampal neurons, it recruits ADAM10 to the plasma membrane. The polypeptide is Disks large homolog 1 (DLG1) (Canis lupus familiaris (Dog)).